The primary structure comprises 205 residues: Ras-related protein rab-6.2 (205 aa).

GTP is bound by residues 18–25 (EQSVGKTS), Thr-42, 66–70 (TAGQE), and 124–127 (KTDL). S-geranylgeranyl cysteine attachment occurs at residues Cys-203 and Cys-205. The residue at position 205 (Cys-205) is a Cysteine methyl ester.

The protein belongs to the small GTPase superfamily. Rab family. In terms of assembly, interacts with GARP complex component vps-52. Interacts (in GTP-bound form) with lin-10. May interact (in GTP-bound form) with eat-17. Highly expressed in body wall muscles, pharyngeal and vulval muscles, hypodermis, intestine, the gonad, coelomocytes, and neurons, including command interneuron (at protein level). Highly expressed in the terminal bulb muscles.

The protein localises to the perikaryon. The protein resides in the cell projection. Its subcellular location is the dendrite. It localises to the golgi apparatus. It is found in the cytoplasmic vesicle. Functionally, the small GTPases Rab are key regulators of intracellular membrane trafficking, from the formation of transport vesicles to their fusion with membranes. Rabs cycle between an inactive GDP-bound form and an active GTP-bound form that is able to recruit to membranes different set of downstream effectors directly responsible for vesicle formation, movement, tethering and fusion. In its active GTP-bound form, acts redundantly with rab-6.1 (in its active GTP-bound form) to positively regulate the retrograde trafficking of cargo molecules from endosomes to the Golgi compartment. Required for the retrograde trafficking of glr-1, a subunit of AMPA-type glutamate receptors (AMPRs), out of early endosomes and into the Golgi compartment in neurons. Its role in glr-1 trafficking may partly be mediated by its interaction with lin-10 and association with components of the retromer complex such as rme-8. Together with rab-6.2, promotes the retrograde trafficking of mig-14 from endosomes to Golgi structures in the intestine. Plays a role in the epidermis to promote cuticle integrity and impermeability of the cuticle barrier to exogenous molecules. May have a role in the glycosylation of the cuticular surface. Required for seam cell division and alae formation. Required for grinder formation, which is the feeding organ that breaks down food. In contrast to rab-6.1, may play a minor role in the exocytosis of secretory vesicles (cortical granules) during the oocyte-to-embryo transition. This Caenorhabditis elegans protein is Ras-related protein rab-6.2.